The sequence spans 426 residues: Serine--tRNA ligase (426 aa).

231-233 (TAE) contributes to the L-serine binding site. 262 to 264 (RSE) is a binding site for ATP. Glu285 contributes to the L-serine binding site. 349–352 (EISS) is an ATP binding site. Residue Ser384 coordinates L-serine.

The protein belongs to the class-II aminoacyl-tRNA synthetase family. Type-1 seryl-tRNA synthetase subfamily. Homodimer. The tRNA molecule binds across the dimer.

It localises to the cytoplasm. The catalysed reaction is tRNA(Ser) + L-serine + ATP = L-seryl-tRNA(Ser) + AMP + diphosphate + H(+). It carries out the reaction tRNA(Sec) + L-serine + ATP = L-seryl-tRNA(Sec) + AMP + diphosphate + H(+). The protein operates within aminoacyl-tRNA biosynthesis; selenocysteinyl-tRNA(Sec) biosynthesis; L-seryl-tRNA(Sec) from L-serine and tRNA(Sec): step 1/1. Catalyzes the attachment of serine to tRNA(Ser). Is also able to aminoacylate tRNA(Sec) with serine, to form the misacylated tRNA L-seryl-tRNA(Sec), which will be further converted into selenocysteinyl-tRNA(Sec). The sequence is that of Serine--tRNA ligase from Laribacter hongkongensis (strain HLHK9).